Reading from the N-terminus, the 294-residue chain is MLENLSTEHRNEKTMNLDEMNIKEILQRMNEEDRTVALAVEKEIEHIEKVVRVVIQSFEEEGRLIYIGAGTSGRLGILDAVECPPTFGTDDKMVQGFIAGGLKAFTKAVEGAEDREELAEEDLKSIGLNEKDTVIGIAASGRTPYVIGGLKYANSVGASTASISCNKNAEISKYAKLNVEVETGAEILTGSTRLKAGTAQKLVLNMISTASMIGVGKVYKNLMVDVQSTNEKLVERSKRIIVEATGVSYEVAAEHYEKAERNVKAAIVMVLLQCEYGEALEKLKEAKGFVKKAL.

In terms of domain architecture, SIS spans 54–217 (VIQSFEEEGR…STASMIGVGK (164 aa)). Glu82 (proton donor) is an active-site residue. Residue Glu113 is part of the active site.

The protein belongs to the GCKR-like family. MurNAc-6-P etherase subfamily. As to quaternary structure, homodimer.

The enzyme catalyses N-acetyl-D-muramate 6-phosphate + H2O = N-acetyl-D-glucosamine 6-phosphate + (R)-lactate. The protein operates within amino-sugar metabolism; N-acetylmuramate degradation. Functionally, specifically catalyzes the cleavage of the D-lactyl ether substituent of MurNAc 6-phosphate, producing GlcNAc 6-phosphate and D-lactate. The protein is N-acetylmuramic acid 6-phosphate etherase of Bacillus cereus (strain AH820).